The sequence spans 758 residues: MVRTKNQSSSSSASSSSTKSPIKSSSATGSSGGGVGGRQSTHRSSSASNVAAVVAGGSSAAGGGSSSNRRSPGSSPDGDDDTTTTDDLTPTTCSPRSGHHHTYGGYSSSVHKQNLYVVSFPIIFLFNVLRSLIYQLFCIFRYLYGASTKVIYRPHRRDCNIEIVVQNSSKEQQQSLNHPSELNRDSDGQEQQLSNQPQRFRPIQPLEMAANRPGGGYSPGPGDPLLAKQKHHHRRAFEYISKALKIDEENEGHKELAIELYRKGIKELEDGIAVDCWSGRGDVWDRAQRLHDKMQTNLSMARDRLHFLALREQDLQMQRLSLKEKQNEQAPSKPQRTREPMLAGMTNEPMKLRVRSSGYGPKATTGAQPTASGRKLTIGSKRPVNLAVANKSQTLPRNLGSKTSVGAVQRQPAKTAATPPAVRRQFSSGRNTPPQRSRTPINNNGPSGSGASTPVVSVKGVEQKLVQLILDEIVEGGAKVEWTDIAGQDVAKQALQEMVILPSVRPELFTGLRAPAKGLLLFGPPGNGKTLLARAVATECSATFLNISAASLTSKYVGDGEKLVRALFAVARHMQPSIIFIDEVDSLLSERSSSEHEASRRLKTEFLVEFDGLPGNPDGDRIVVLAATNRPQELDEAALRRFTKRVYVSLPDEQTRELLLNRLLQKQGSPLDTEALRRLAKITDGYSGSDLTALAKDAALEPIRELNVEQVKCLDISAMRAITEQDFHSSLKRIRRSVAPQSLNSYEKWSQDYGDITI.

A disordered region spans residues 1–99 (MVRTKNQSSS…PTTCSPRSGH (99 aa)). The Cytoplasmic segment spans residues 1-121 (MVRTKNQSSS…KQNLYVVSFP (121 aa)). The required for localization to punctate cytoplasmic foci stretch occupies residues 1 to 210 (MVRTKNQSSS…RPIQPLEMAA (210 aa)). 4 stretches are compositionally biased toward low complexity: residues 8–29 (SSSS…SATG), 43–58 (RSSS…AGGS), 66–76 (SSNRRSPGSSP), and 85–95 (TDDLTPTTCSP). Residues 122-142 (IIFLFNVLRSLIYQLFCIFRY) constitute an intramembrane region (helical). At 143–758 (LYGASTKVIY…WSQDYGDITI (616 aa)) the chain is on the cytoplasmic side. Composition is skewed to polar residues over residues 169 to 180 (SKEQQQSLNHPS) and 189 to 198 (QEQQLSNQPQ). Positions 169–221 (SKEQQQSLNHPSELNRDSDGQEQQLSNQPQRFRPIQPLEMAANRPGGGYSPGP) are disordered. Residues 208–758 (MAANRPGGGY…WSQDYGDITI (551 aa)) are sufficient for interaction with microtubules and microtubule severing. The region spanning 233 to 308 (HRRAFEYISK…SMARDRLHFL (76 aa)) is the MIT domain. Disordered regions lie at residues 353-376 (RVRS…GRKL) and 390-454 (NKSQ…ASTP). Composition is skewed to polar residues over residues 390-406 (NKSQ…TSVG) and 425-454 (QFSS…ASTP). Positions 443-455 (NNGPSGSGASTPV) are required for interaction with microtubules. ATP is bound at residue 523–530 (GPPGNGKT).

The protein belongs to the AAA ATPase family. Spastin subfamily. As to quaternary structure, homohexamer. The homohexamer is stabilized by ATP-binding. The homohexamer may adopt a ring conformation through which microtubules pass prior to being severed. Interacts with microtubules. Interacts with atl; may be involved in microtubule dynamics.

The protein resides in the membrane. It localises to the cytoplasm. Its subcellular location is the cytoskeleton. It is found in the microtubule organizing center. The protein localises to the centrosome. The protein resides in the chromosome. It localises to the lipid droplet. It carries out the reaction n ATP + n H2O + a microtubule = n ADP + n phosphate + (n+1) alpha/beta tubulin heterodimers.. Functionally, ATP-dependent microtubule severing protein. Stimulates microtubule minus-end depolymerization and poleward microtubule flux in the mitotic spindle. Regulates microtubule stability in the neuromuscular junction synapse. Involved in lipid metabolism by regulating the size and distribution of lipid droplets. Involved in axon regeneration by regulating microtubule severing. This chain is Spastin, found in Drosophila yakuba (Fruit fly).